A 317-amino-acid polypeptide reads, in one-letter code: Heme-binding protein HMX1 (317 aa).

At 1 to 289 (MEDSSNTIIP…FNKDSATRRA (289 aa)) the chain is on the cytoplasmic side. Residues 290 to 310 (LHTVMLLVLSIIAIWVLYFLV) form a helical; Anchor for type IV membrane protein membrane-spanning segment.

The cofactor is heme.

It localises to the endoplasmic reticulum membrane. In terms of biological role, plays an important role in the degradation of heme under conditions of iron deprivation. This chain is Heme-binding protein HMX1 (HMX1), found in Saccharomyces cerevisiae (strain ATCC 204508 / S288c) (Baker's yeast).